The primary structure comprises 1044 residues: Outer dynein arm-docking complex subunit 2 (1044 aa).

Composition is skewed to basic and acidic residues over residues I317 to I338 and S379 to R401. Disordered regions lie at residues I317 to A409 and I423 to D446. 5 HEAT repeats span residues P448 to T485, Q487 to I527, N530 to A568, A627 to Y665, and A668 to T706. ARM repeat units lie at residues E484–H523, P525–K564, G535–G577, Y622–S661, E663–E702, K746–Q785, P828–Q867, D871–K910, Q912–M951, G953–E992, and G1004–I1031. HEAT repeat units follow at residues M831–K870, E874–N914, A916–N955, A958–N996, and T999–A1037.

In terms of assembly, component of the outer dynein arm-docking complex along with ODAD1, ODAD3, ODAD4 and CLXN. Interacts with CFAP61. As to expression, expressed in trachea multiciliated cells.

It is found in the cytoplasm. Its subcellular location is the cytoskeleton. The protein localises to the cilium axoneme. It localises to the cilium basal body. Its function is as follows. Component of the outer dynein arm-docking complex (ODA-DC) that mediates outer dynein arms (ODA) binding onto the doublet microtubule. Involved in mediating assembly of both ODAs and their axonemal docking complex onto ciliary microtubules. This chain is Outer dynein arm-docking complex subunit 2 (ODAD2), found in Bos taurus (Bovine).